The chain runs to 457 residues: ATP-dependent protease ATPase subunit HslU (457 aa).

ATP is bound by residues V21, 63–68 (GVGKTE), D269, E335, and R407.

Belongs to the ClpX chaperone family. HslU subfamily. In terms of assembly, a double ring-shaped homohexamer of HslV is capped on each side by a ring-shaped HslU homohexamer. The assembly of the HslU/HslV complex is dependent on binding of ATP.

It localises to the cytoplasm. ATPase subunit of a proteasome-like degradation complex; this subunit has chaperone activity. The binding of ATP and its subsequent hydrolysis by HslU are essential for unfolding of protein substrates subsequently hydrolyzed by HslV. HslU recognizes the N-terminal part of its protein substrates and unfolds these before they are guided to HslV for hydrolysis. This Desulfotalea psychrophila (strain LSv54 / DSM 12343) protein is ATP-dependent protease ATPase subunit HslU.